The following is a 1523-amino-acid chain: MALGRTGAGAAVRARLALGLALASILSGPPAAACPTKCTCSAASVDCHGLGLRAVPRGIPRNAERLDLDRNNITRITKMDFAGLKNLRVLHLEDNQVSIIERGAFQDLKQLERLRLNKNKLQVLPELLFQSTPKLTRLDLSENQIQGIPRKAFRGVTGVKNLQLDNNHISCIEDGAFRALRDLEILTLNNNNISRILVTSFNHMPKIRTLRLHSNHLYCDCHLAWLSDWLRQRRTIGQFTLCMAPVHLRGFSVADVQKKEYVCPGPHSEAPACNANSLSCPSACSCSNNIVDCRGKGLTEIPANLPEGIVEIRLEQNSIKSIPAGAFTQYKKLKRIDISKNQISDIAPDAFQGLKSLTSLVLYGNKITEIPKGLFDGLVSLQLLLLNANKINCLRVNTFQDLQNLNLLSLYDNKLQTISKGLFVPLQSIQTLHLAQNPFVCDCHLKWLADYLQDNPIETSGARCSSPRRLANKRISQIKSKKFRCSGSEDYRNRFSSECFMDLVCPEKCRCEGTIVDCSNQKLARIPSHLPEYTTDLRLNDNDISVLEATGIFKKLPNLRKINLSNNRIKEVREGAFDGAAGVQELMLTGNQLETMHGRMFRGLSSLKTLMLRSNLISCVSNDTFAGLSSVRLLSLYDNRITTITPGAFTTLVSLSTINLLSNPFNCNCHMAWLGRWLRKRRIVSGNPRCQKPFFLKEIPIQDVAIQDFTCDGNEESSCQLSPRCPEQCTCVETVVRCSNRGLHALPKGMPKDVTELYLEGNHLTAVPKELSAFRQLTLIDLSNNSISMLTNHTFSNMSHLSTLILSYNRLRCIPVHAFNGLRSLRVLTLHGNDISSVPEGSFNDLTSLSHLALGTNPLHCDCSLRWLSEWVKAGYKEPGIARCSSPESMADRLLLTTPTHRFQCKGPVDINIVAKCNACLSSPCKNNGTCSQDPVEQYRCTCPYSYKGKDCTVPINTCVQNPCEHGGTCHLSENLRDGFSCSCPLGFEGQRCEINPDDCEDNDCENSATCVDGINNYACLCPPNYTGELCDEVIDYCVPEMNLCQHEAKCISLDKGFRCECVPGYSGKLCETNNDDCVAHKCRHGAQCVDEVNGYTCICPQGFSGLFCEHPPPMVLLQTSPCDQYECQNGAQCIVVQQEPTCRCPPGFAGPRCEKLITVNFVGKDSYVELASAKVRPQANISLQVATDKDNGILLYKGDNDPLALELYQGHVRLVYDSLSSPPTTVYSVETVNDGQFHSVELVMLNQTLNLVVDKGAPKSLGKLQKQPAVGSNSPLYLGGIPTSTGLSALRQGADRPLGGFHGCIHEVRINNELQDFKALPPQSLGVSPGCKSCTVCRHGLCRSVEKDSVVCECHPGWTGPLCDQEARDPCLGHSCRHGTCMATGDSYVCKCAEGYGGALCDQKNDSASACSAFKCHHGQCHISDRGEPYCLCQPGFSGHHCEQENPCMGEIVREAIRRQKDYASCATASKVPIMECRGGCGSQCCQPIRSKRRKYVFQCTDGSSFVEEVERHLECGCRACS.

The signal sequence occupies residues 1–33 (MALGRTGAGAAVRARLALGLALASILSGPPAAA). The LRRNT domain maps to 34–61 (CPTKCTCSAASVDCHGLGLRAVPRGIPR). LRR repeat units follow at residues 62–83 (NAER…DFAG), 86–107 (NLRV…AFQD), 110–131 (QLER…LFQS), 134–155 (KLTR…AFRG), 158–179 (GVKN…AFRA), and 182–203 (DLEI…SFNH). N-linked (GlcNAc...) asparagine glycosylation is present at Asn72. N-linked (GlcNAc...) asparagine glycosylation occurs at Asn192. The 51-residue stretch at 215-265 (NHLYCDCHLAWLSDWLRQRRTIGQFTLCMAPVHLRGFSVADVQKKEYVCPG) folds into the LRRCT 1 domain. Residues 271 to 307 (PACNANSLSCPSACSCSNNIVDCRGKGLTEIPANLPE) form the LRRNT 2 domain. The cysteines at positions 284 and 293 are disulfide-linked. LRR repeat units follow at residues 308 to 329 (GIVE…AFTQ), 332 to 353 (KLKR…AFQG), 356 to 377 (SLTS…LFDG), 380 to 401 (SLQL…TFQD), and 404 to 425 (NLNL…LFVP). The region spanning 437–487 (NPFVCDCHLKWLADYLQDNPIETSGARCSSPRRLANKRISQIKSKKFRCSG) is the LRRCT 2 domain. 4 disulfides stabilise this stretch: Cys441/Cys464, Cys443/Cys485, Cys505/Cys511, and Cys509/Cys518. Residues 496–532 (SSECFMDLVCPEKCRCEGTIVDCSNQKLARIPSHLPE) enclose the LRRNT 3 domain. 5 LRR repeats span residues 533 to 554 (YTTD…GIFK), 558 to 579 (NLRK…AFDG), 582 to 603 (GVQE…MFRG), 606 to 627 (SLKT…TFAG), and 630 to 651 (SVRL…AFTT). The N-linked (GlcNAc...) asparagine glycan is linked to Asn563. Asn622 is a glycosylation site (N-linked (GlcNAc...) asparagine). One can recognise an LRRCT 3 domain in the interval 663-713 (NPFNCNCHMAWLGRWLRKRRIVSGNPRCQKPFFLKEIPIQDVAIQDFTCDG). Intrachain disulfides connect Cys667/Cys690 and Cys669/Cys711. Residues 716–752 (ESSCQLSPRCPEQCTCVETVVRCSNRGLHALPKGMPK) form the LRRNT 4 domain. LRR repeat units follow at residues 753-774 (DVTE…LSAF), 776-797 (QLTL…TFSN), 800-821 (HLST…AFNG), and 824-845 (SLRV…SFND). 3 N-linked (GlcNAc...) asparagine glycosylation sites follow: Asn784, Asn792, and Asn797. The LRRCT 4 domain occupies 857–907 (NPLHCDCSLRWLSEWVKAGYKEPGIARCSSPESMADRLLLTTPTHRFQCKG). 6 consecutive EGF-like domains span residues 918–953 (NACL…KDCT), 955–994 (PINT…QRCE), 996–1032 (NPDD…ELCD), 1034–1072 (VIDY…KLCE), 1074–1110 (NNDD…LFCE), and 1119–1155 (QTSP…PRCE). Cystine bridges form between Cys920-Cys931, Cys925-Cys941, Cys943-Cys952, Cys959-Cys970, Cys964-Cys982, Cys984-Cys993, Cys1000-Cys1011, Cys1005-Cys1020, Cys1022-Cys1031, Cys1038-Cys1051, Cys1045-Cys1060, Cys1062-Cys1071, Cys1078-Cys1089, Cys1083-Cys1098, Cys1100-Cys1109, Cys1123-Cys1134, Cys1128-Cys1143, and Cys1145-Cys1154. Asn928 carries N-linked (GlcNAc...) asparagine glycosylation. N-linked (GlcNAc...) asparagine glycosylation is present at Asn1025. In terms of domain architecture, Laminin G-like spans 1158-1332 (ITVNFVGKDS…PQSLGVSPGC (175 aa)). Asn1181 and Asn1247 each carry an N-linked (GlcNAc...) asparagine glycan. 5 cysteine pairs are disulfide-bonded: Cys1305-Cys1332, Cys1355-Cys1364, Cys1372-Cys1382, Cys1377-Cys1391, and Cys1393-Cys1402. EGF-like domains lie at 1340-1365 (HGLC…PLCD) and 1368-1403 (ARDP…ALCD). A glycan (N-linked (GlcNAc...) asparagine) is linked at Asn1406. One can recognise an EGF-like 9 domain in the interval 1408-1444 (SASACSAFKCHHGQCHISDRGEPYCLCQPGFSGHHCE). 7 disulfide bridges follow: Cys1412/Cys1422, Cys1417/Cys1432, Cys1434/Cys1443, Cys1449/Cys1487, Cys1467/Cys1501, Cys1478/Cys1517, and Cys1482/Cys1519. The CTCK domain occupies 1449–1523 (CMGEIVREAI…HLECGCRACS (75 aa)).

Its subcellular location is the secreted. May act as molecular guidance cue in cellular migration, and function may be mediated by interaction with roundabout homolog receptors. This chain is Slit homolog 3 protein (Slit3), found in Mus musculus (Mouse).